Reading from the N-terminus, the 361-residue chain is DNA replication and repair protein RecF (361 aa).

Gly30–Thr37 is an ATP binding site.

The protein belongs to the RecF family.

Its subcellular location is the cytoplasm. Functionally, the RecF protein is involved in DNA metabolism; it is required for DNA replication and normal SOS inducibility. RecF binds preferentially to single-stranded, linear DNA. It also seems to bind ATP. The sequence is that of DNA replication and repair protein RecF from Yersinia pestis.